The following is a 98-amino-acid chain: Large ribosomal subunit protein uL23 (98 aa).

It belongs to the universal ribosomal protein uL23 family. In terms of assembly, part of the 50S ribosomal subunit. Contacts protein L29, and trigger factor when it is bound to the ribosome.

In terms of biological role, one of the early assembly proteins it binds 23S rRNA. One of the proteins that surrounds the polypeptide exit tunnel on the outside of the ribosome. Forms the main docking site for trigger factor binding to the ribosome. The sequence is that of Large ribosomal subunit protein uL23 from Rickettsia rickettsii (strain Iowa).